Reading from the N-terminus, the 314-residue chain is Ribosomal RNA small subunit methyltransferase H (314 aa).

Residues 37–39 (GSH), D57, F84, D105, and Q112 contribute to the S-adenosyl-L-methionine site.

The protein belongs to the methyltransferase superfamily. RsmH family.

It is found in the cytoplasm. It carries out the reaction cytidine(1402) in 16S rRNA + S-adenosyl-L-methionine = N(4)-methylcytidine(1402) in 16S rRNA + S-adenosyl-L-homocysteine + H(+). Its function is as follows. Specifically methylates the N4 position of cytidine in position 1402 (C1402) of 16S rRNA. This Fusobacterium nucleatum subsp. nucleatum (strain ATCC 25586 / DSM 15643 / BCRC 10681 / CIP 101130 / JCM 8532 / KCTC 2640 / LMG 13131 / VPI 4355) protein is Ribosomal RNA small subunit methyltransferase H.